Reading from the N-terminus, the 66-residue chain is Prokaryotic ubiquitin-like protein UBact (66 aa).

Residues 1–66 are disordered; it reads MNMRYTLMPE…AERYRQRTGE (66 aa). Basic and acidic residues predominate over residues 30 to 66; it reads GGPRRPETGSPDKDNLLKRMRKVDPKQAERYRQRTGE. Glu-66 participates in a covalent cross-link: Isoglutamyl lysine isopeptide (Glu-Lys) (interchain with K-? in acceptor proteins).

Belongs to the ubiquitin-like protein UBact family.

May function as a protein modifier covalently attached to lysine residues of substrate proteins. This may serve to target the modified proteins for degradation by proteasomes. This Nitrospira moscoviensis protein is Prokaryotic ubiquitin-like protein UBact.